Reading from the N-terminus, the 171-residue chain is Mitochondrial import inner membrane translocase subunit Tim17-A (171 aa).

A disulfide bond links C9 and C78. 3 helical membrane passes run 17–37, 63–77, and 113–133; these read CGGAFTMGTIGGGIFQAFKGF, GGSFAVWGGLFSTID, and VGSAAMGGILLALIEGAGILL. Residues 147–171 form a disordered region; it reads FAEDHSQLPSSQLPSSPFGDYRQYQ. Residues 153–163 show a composition bias toward low complexity; that stretch reads QLPSSQLPSSP.

The protein belongs to the Tim17/Tim22/Tim23 family. Component of the TIM23 complex at least composed of TIMM23, TIMM17 (TIMM17A or TIMM17B) and TIMM50. The complex interacts with the TIMM44 component of the PAM complex and with DNAJC15. Degraded by YMEL1 downstream of the integrated stress response (ISR).

The protein resides in the mitochondrion inner membrane. Functionally, essential component of the TIM23 complex, a complex that mediates the translocation of transit peptide-containing proteins across the mitochondrial inner membrane. The polypeptide is Mitochondrial import inner membrane translocase subunit Tim17-A (Timm17a) (Rattus norvegicus (Rat)).